Reading from the N-terminus, the 256-residue chain is uncharacterized protein (256 aa).

Disordered regions lie at residues methionine 1 to aspartate 38 and proline 51 to glutamine 75.

This is an uncharacterized protein from Homo sapiens (Human).